The chain runs to 97 residues: UPF0250 protein HD_2015 (97 aa).

Belongs to the UPF0250 family.

The polypeptide is UPF0250 protein HD_2015 (Haemophilus ducreyi (strain 35000HP / ATCC 700724)).